The chain runs to 301 residues: ATP synthase gamma chain (301 aa).

It belongs to the ATPase gamma chain family. As to quaternary structure, F-type ATPases have 2 components, CF(1) - the catalytic core - and CF(0) - the membrane proton channel. CF(1) has five subunits: alpha(3), beta(3), gamma(1), delta(1), epsilon(1). CF(0) has three main subunits: a, b and c.

It is found in the cell inner membrane. Its function is as follows. Produces ATP from ADP in the presence of a proton gradient across the membrane. The gamma chain is believed to be important in regulating ATPase activity and the flow of protons through the CF(0) complex. The sequence is that of ATP synthase gamma chain from Bordetella bronchiseptica (strain ATCC BAA-588 / NCTC 13252 / RB50) (Alcaligenes bronchisepticus).